We begin with the raw amino-acid sequence, 75 residues long: Small ribosomal subunit protein bS16 (75 aa).

Belongs to the bacterial ribosomal protein bS16 family.

The sequence is that of Small ribosomal subunit protein bS16 from Helicobacter pylori (strain G27).